Here is a 243-residue protein sequence, read N- to C-terminus: Venom nerve growth factor 1 (243 aa).

An N-terminal signal peptide occupies residues 1–18; that stretch reads MSMLCYTLIIAFLIGIWA. A propeptide spanning residues 19–125 is cleaved from the precursor; sequence APKSEDNVPL…TLNRNIRAKR (107 aa). Residues 47-66 show a composition bias toward basic and acidic residues; the sequence is GLKTSRNTDQRHPAPKKAED. A disordered region spans residues 47 to 69; the sequence is GLKTSRNTDQRHPAPKKAEDQEL. 3 cysteine pairs are disulfide-bonded: C139-C204, C182-C232, and C192-C234. N-linked (GlcNAc...) asparagine glycosylation occurs at N148.

It belongs to the NGF-beta family. In terms of assembly, homodimer; non-covalently linked. As to expression, expressed by the venom gland.

It localises to the secreted. Functionally, nerve growth factor is important for the development and maintenance of the sympathetic and sensory nervous systems. It stimulates division and differentiation of sympathetic and embryonic sensory neurons as well as basal forebrain cholinergic neurons in the brain. Its relevance in the snake venom is not clear. However, it has been shown to inhibit metalloproteinase-dependent proteolysis of platelet glycoprotein Ib alpha, suggesting a metalloproteinase inhibition to prevent metalloprotease autodigestion and/or protection against prey proteases. Binds a lipid between the two protein chains in the homodimer. The lipid-bound form promotes histamine relase from mouse mast cells, contrary to the lipid-free form. This is Venom nerve growth factor 1 from Pseudonaja textilis (Eastern brown snake).